Consider the following 360-residue polypeptide: UDP-N-acetylglucosamine--N-acetylmuramyl-(pentapeptide) pyrophosphoryl-undecaprenol N-acetylglucosamine transferase (360 aa).

UDP-N-acetyl-alpha-D-glucosamine contacts are provided by residues 12-14 (TAG), Ser-198, and Gln-289.

It belongs to the glycosyltransferase 28 family. MurG subfamily.

The protein resides in the cell membrane. The catalysed reaction is Mur2Ac(oyl-L-Ala-gamma-D-Glu-L-Lys-D-Ala-D-Ala)-di-trans,octa-cis-undecaprenyl diphosphate + UDP-N-acetyl-alpha-D-glucosamine = beta-D-GlcNAc-(1-&gt;4)-Mur2Ac(oyl-L-Ala-gamma-D-Glu-L-Lys-D-Ala-D-Ala)-di-trans,octa-cis-undecaprenyl diphosphate + UDP + H(+). Its pathway is cell wall biogenesis; peptidoglycan biosynthesis. Its function is as follows. Cell wall formation. Catalyzes the transfer of a GlcNAc subunit on undecaprenyl-pyrophosphoryl-MurNAc-pentapeptide (lipid intermediate I) to form undecaprenyl-pyrophosphoryl-MurNAc-(pentapeptide)GlcNAc (lipid intermediate II). The polypeptide is UDP-N-acetylglucosamine--N-acetylmuramyl-(pentapeptide) pyrophosphoryl-undecaprenol N-acetylglucosamine transferase (Streptococcus equi subsp. equi (strain 4047)).